The following is a 469-amino-acid chain: Aspartyl/glutamyl-tRNA(Asn/Gln) amidotransferase subunit B (469 aa).

This sequence belongs to the GatB/GatE family. GatB subfamily. As to quaternary structure, heterotrimer of A, B and C subunits.

It catalyses the reaction L-glutamyl-tRNA(Gln) + L-glutamine + ATP + H2O = L-glutaminyl-tRNA(Gln) + L-glutamate + ADP + phosphate + H(+). It carries out the reaction L-aspartyl-tRNA(Asn) + L-glutamine + ATP + H2O = L-asparaginyl-tRNA(Asn) + L-glutamate + ADP + phosphate + 2 H(+). Functionally, allows the formation of correctly charged Asn-tRNA(Asn) or Gln-tRNA(Gln) through the transamidation of misacylated Asp-tRNA(Asn) or Glu-tRNA(Gln) in organisms which lack either or both of asparaginyl-tRNA or glutaminyl-tRNA synthetases. The reaction takes place in the presence of glutamine and ATP through an activated phospho-Asp-tRNA(Asn) or phospho-Glu-tRNA(Gln). The protein is Aspartyl/glutamyl-tRNA(Asn/Gln) amidotransferase subunit B of Thermus thermophilus (strain ATCC BAA-163 / DSM 7039 / HB27).